Reading from the N-terminus, the 227-residue chain is PKHD-type hydroxylase GOX0559 (227 aa).

Positions 78–178 constitute a Fe2OG dioxygenase domain; that stretch reads RVYPPLFNRY…RWASFFWSQS (101 aa). Fe cation-binding residues include His-96, Asp-98, and His-159. Arg-169 lines the 2-oxoglutarate pocket.

Fe(2+) is required as a cofactor. L-ascorbate serves as cofactor.

The chain is PKHD-type hydroxylase GOX0559 from Gluconobacter oxydans (strain 621H) (Gluconobacter suboxydans).